We begin with the raw amino-acid sequence, 457 residues long: Probable mitochondrial-processing peptidase subunit beta (457 aa).

His66 contacts Zn(2+). The active-site Proton acceptor is the Glu69. The Zn(2+) site is built by His70 and Glu146.

Belongs to the peptidase M16 family. Heterodimer of mas2 (alpha) and qcr1 (beta) subunits, forming the mitochondrial processing protease (MPP) in which mas2 is involved in substrate recognition and binding and qcr1 is the catalytic subunit. Zn(2+) is required as a cofactor.

The protein localises to the mitochondrion matrix. It catalyses the reaction Release of N-terminal transit peptides from precursor proteins imported into the mitochondrion, typically with Arg in position P2.. Its activity is regulated as follows. Binding to mas2 is required for catalytic activity. In terms of biological role, catalytic subunit of the essential mitochondrial processing protease (MPP), which cleaves the mitochondrial sequence off newly imported precursors proteins. Preferentially, cleaves after an arginine at position P2. The sequence is that of Probable mitochondrial-processing peptidase subunit beta (qcr1) from Schizosaccharomyces pombe (strain 972 / ATCC 24843) (Fission yeast).